A 116-amino-acid chain; its full sequence is Transcription elongation factor SPT4 homolog 2 (116 aa).

Residues 19–39 (CLRCRLVKTYDQFRDAGCENC) form a C4-type zinc finger.

Belongs to the SPT4 family.

The protein resides in the nucleus. Its function is as follows. May regulate transcription elongation by RNA polymerase II. May enhance transcriptional pausing at sites proximal to the promoter, which may in turn facilitate the assembly of an elongation competent RNA polymerase II complex. This is Transcription elongation factor SPT4 homolog 2 from Arabidopsis thaliana (Mouse-ear cress).